A 339-amino-acid chain; its full sequence is Glycerol-3-phosphate dehydrogenase [NAD(P)+] (339 aa).

Residues serine 15, tyrosine 16, histidine 36, and lysine 110 each contribute to the NADPH site. Sn-glycerol 3-phosphate is bound by residues lysine 110, glycine 139, and threonine 141. Alanine 143 is a binding site for NADPH. Positions 195, 248, 258, 259, and 260 each coordinate sn-glycerol 3-phosphate. Catalysis depends on lysine 195, which acts as the Proton acceptor. Arginine 259 is a binding site for NADPH. NADPH-binding residues include valine 283 and glutamate 285.

The protein belongs to the NAD-dependent glycerol-3-phosphate dehydrogenase family.

The protein resides in the cytoplasm. It carries out the reaction sn-glycerol 3-phosphate + NAD(+) = dihydroxyacetone phosphate + NADH + H(+). It catalyses the reaction sn-glycerol 3-phosphate + NADP(+) = dihydroxyacetone phosphate + NADPH + H(+). The protein operates within membrane lipid metabolism; glycerophospholipid metabolism. Functionally, catalyzes the reduction of the glycolytic intermediate dihydroxyacetone phosphate (DHAP) to sn-glycerol 3-phosphate (G3P), the key precursor for phospholipid synthesis. The sequence is that of Glycerol-3-phosphate dehydrogenase [NAD(P)+] from Citrobacter koseri (strain ATCC BAA-895 / CDC 4225-83 / SGSC4696).